We begin with the raw amino-acid sequence, 842 residues long: Probable vinculin (842 aa).

A coiled-coil region spans residues 585-679 (KEARKRLDDV…AAEEEERKRA (95 aa)).

The protein belongs to the vinculin/alpha-catenin family. Monomer. Associates with F-actin. Interacts with aarA, ctxA, ctxB and rgaA. In terms of tissue distribution, epithelium.

The protein resides in the cytoplasm. It is found in the cell cortex. The protein localises to the cell junction. Involved in cell adhesion. Thought to play an important role in cytokinesis B, probably by providing substrate adhesion and traction forces. Required to organize and polarize the tip epithelium during cytokinesis. Required for the normal distribution of myosin in the tip epithelium. Involved in the localization of ctxA, ctxB, dcsA, exoc6 and rgaA. Thought to form a complex with ctxA, ctxB, and rgaA which regulates myosin accumulation to the apical plasma membrane. The chain is Probable vinculin (ctnnA) from Dictyostelium discoideum (Social amoeba).